Here is a 177-residue protein sequence, read N- to C-terminus: Large ribosomal subunit protein uL6 (177 aa).

It belongs to the universal ribosomal protein uL6 family. In terms of assembly, part of the 50S ribosomal subunit.

In terms of biological role, this protein binds to the 23S rRNA, and is important in its secondary structure. It is located near the subunit interface in the base of the L7/L12 stalk, and near the tRNA binding site of the peptidyltransferase center. This is Large ribosomal subunit protein uL6 from Yersinia pseudotuberculosis serotype O:1b (strain IP 31758).